The following is a 444-amino-acid chain: DNA primase DnaG (444 aa).

A Toprim domain is found at 186–260 (DSIIVVEGRN…EVDFVARAPP (75 aa)). 3 residues coordinate Mg(2+): E192, D234, and D236.

Belongs to the archaeal DnaG primase family. In terms of assembly, forms a ternary complex with MCM helicase and DNA. Component of the archaeal exosome complex. Mg(2+) serves as cofactor.

The catalysed reaction is ssDNA + n NTP = ssDNA/pppN(pN)n-1 hybrid + (n-1) diphosphate.. In terms of biological role, RNA polymerase that catalyzes the synthesis of short RNA molecules used as primers for DNA polymerase during DNA replication. Also part of the exosome, which is a complex involved in RNA degradation. Acts as a poly(A)-binding protein that enhances the interaction between heteromeric, adenine-rich transcripts and the exosome. The chain is DNA primase DnaG from Thermoplasma volcanium (strain ATCC 51530 / DSM 4299 / JCM 9571 / NBRC 15438 / GSS1).